A 152-amino-acid chain; its full sequence is Pseudo histidine-containing phosphotransfer protein 5 (152 aa).

Residues 38-140 (NPNFAEEVVS…ESYFQLLRQA (103 aa)) enclose the HPt domain.

Functionally, functions as a two-component phosphorelay mediator between cytokinin sensor histidine kinases and response regulators (B-type ARRs). Plays an important role in propagating cytokinin signal transduction. The polypeptide is Pseudo histidine-containing phosphotransfer protein 5 (Oryza sativa subsp. japonica (Rice)).